The primary structure comprises 440 residues: Peroxisome proliferator-activated receptor delta (440 aa).

A disordered region spans residues 1 to 53 (MEQPQEETPEAREEEKEEVAMGDGAPELNGGPEHTLPSSSCADLSQNSSPSSL). A compositionally biased stretch (polar residues) spans 36–53 (LPSSSCADLSQNSSPSSL). The segment at residues 70-144 (NMECRVCGDK…LGMSHNAIRF (75 aa)) is a DNA-binding region (nuclear receptor). 2 NR C4-type zinc fingers span residues 73-93 (CRVCGDKASGFHYGVHACEGC) and 110-132 (CDRICKIQKKNRNKCQYCRFQKC). The region spanning 210 to 438 (FVIHDIETLW…HPLLQEIYKD (229 aa)) is the NR LBD domain.

The protein belongs to the nuclear hormone receptor family. NR1 subfamily. As to quaternary structure, heterodimer with the retinoid X receptor. Interacts (via domain NR LBD) with CRY1 and CRY2 in a ligand-dependent manner. Post-translationally, 'Lys-48'-linked polyubiquitinated; leading to proteasomal degradation. Deubiquitinated and stabilized by OTUD3. In terms of tissue distribution, heart, adrenal and intestine.

Its subcellular location is the nucleus. Functionally, ligand-activated transcription factor key mediator of energy metabolism in adipose tissues. Receptor that binds peroxisome proliferators such as hypolipidemic drugs and fatty acids. Has a preference for poly-unsaturated fatty acids, such as gamma-linoleic acid and eicosapentanoic acid. Once activated by a ligand, the receptor binds to promoter elements of target genes. Regulates the peroxisomal beta-oxidation pathway of fatty acids. Functions as transcription activator for the acyl-CoA oxidase gene. Decreases expression of NPC1L1 once activated by a ligand. The polypeptide is Peroxisome proliferator-activated receptor delta (Ppard) (Mus musculus (Mouse)).